Reading from the N-terminus, the 183-residue chain is Gamma-crystallin N-A (183 aa).

4 Beta/gamma crystallin 'Greek key' domains span residues 6-46 (GKIV…RVES), 47-89 (GAWV…KPIK), 95-136 (YRME…KVYG), and 138-180 (GAWA…RRVV).

It belongs to the beta/gamma-crystallin family. As to quaternary structure, monomer.

Functionally, crystallins are the dominant structural components of the vertebrate eye lens. This is Gamma-crystallin N-A (crygna) from Danio rerio (Zebrafish).